The sequence spans 206 residues: Ribosomal RNA large subunit methyltransferase E (206 aa).

Residues Gly55, Trp57, Asp75, Asp91, and Asp116 each contribute to the S-adenosyl-L-methionine site. Lys156 functions as the Proton acceptor in the catalytic mechanism.

It belongs to the class I-like SAM-binding methyltransferase superfamily. RNA methyltransferase RlmE family.

It localises to the cytoplasm. The enzyme catalyses uridine(2552) in 23S rRNA + S-adenosyl-L-methionine = 2'-O-methyluridine(2552) in 23S rRNA + S-adenosyl-L-homocysteine + H(+). Specifically methylates the uridine in position 2552 of 23S rRNA at the 2'-O position of the ribose in the fully assembled 50S ribosomal subunit. The polypeptide is Ribosomal RNA large subunit methyltransferase E (Blochmanniella floridana).